A 164-amino-acid chain; its full sequence is Phosphopantetheine adenylyltransferase (164 aa).

Ser-10 is a binding site for substrate. ATP-binding positions include 10–11 and His-18; that span reads SF. Substrate contacts are provided by Lys-42, Leu-74, and Arg-88. ATP contacts are provided by residues 89-91, Glu-99, and 124-130; these read GLR and YSFLSSS.

Belongs to the bacterial CoaD family. In terms of assembly, homohexamer. Mg(2+) is required as a cofactor.

The protein resides in the cytoplasm. It carries out the reaction (R)-4'-phosphopantetheine + ATP + H(+) = 3'-dephospho-CoA + diphosphate. It functions in the pathway cofactor biosynthesis; coenzyme A biosynthesis; CoA from (R)-pantothenate: step 4/5. Functionally, reversibly transfers an adenylyl group from ATP to 4'-phosphopantetheine, yielding dephospho-CoA (dPCoA) and pyrophosphate. The polypeptide is Phosphopantetheine adenylyltransferase (Exiguobacterium sp. (strain ATCC BAA-1283 / AT1b)).